The following is a 427-amino-acid chain: UDP-N-acetylglucosamine 1-carboxyvinyltransferase 1 (427 aa).

23–24 contributes to the phosphoenolpyruvate binding site; sequence KN. R96 is a UDP-N-acetyl-alpha-D-glucosamine binding site. C120 acts as the Proton donor in catalysis. C120 bears the 2-(S-cysteinyl)pyruvic acid O-phosphothioketal mark. UDP-N-acetyl-alpha-D-glucosamine contacts are provided by residues 125–129, D309, and V331; that span reads RPIDL.

The protein belongs to the EPSP synthase family. MurA subfamily.

It localises to the cytoplasm. The enzyme catalyses phosphoenolpyruvate + UDP-N-acetyl-alpha-D-glucosamine = UDP-N-acetyl-3-O-(1-carboxyvinyl)-alpha-D-glucosamine + phosphate. Its pathway is cell wall biogenesis; peptidoglycan biosynthesis. Functionally, cell wall formation. Adds enolpyruvyl to UDP-N-acetylglucosamine. The protein is UDP-N-acetylglucosamine 1-carboxyvinyltransferase 1 of Streptococcus pneumoniae (strain ATCC BAA-255 / R6).